The sequence spans 182 residues: Transcription antitermination protein NusB (182 aa).

Residues 159 to 182 (TPVENSEAEAAGYPVEESIEEDSQ) are disordered.

The protein belongs to the NusB family.

Functionally, involved in transcription antitermination. Required for transcription of ribosomal RNA (rRNA) genes. Binds specifically to the boxA antiterminator sequence of the ribosomal RNA (rrn) operons. The chain is Transcription antitermination protein NusB from Corynebacterium diphtheriae (strain ATCC 700971 / NCTC 13129 / Biotype gravis).